A 272-amino-acid polypeptide reads, in one-letter code: Polar tube protein 2 (272 aa).

The N-terminal stretch at 1–21 (MLLLFTVVTLVSAAQVAPVTP) is a signal peptide. Asparagine 134 carries an N-linked (GlcNAc...) asparagine glycan. A disordered region spans residues 231 to 272 (RAIQKKEVKESSKDGEKSSTQNGEGTTDDEDGQQSPDGNGPE). Over residues 234 to 247 (QKKEVKESSKDGEK) the composition is skewed to basic and acidic residues. Over residues 263–272 (QQSPDGNGPE) the composition is skewed to polar residues.

It localises to the spore polar tube. Involved in formation of a polar tube through which the infectious agent is passed on to the host cell. The chain is Polar tube protein 2 (PTP2) from Encephalitozoon hellem (Microsporidian parasite).